The chain runs to 273 residues: Inactive endochitinase At2g43600 (273 aa).

An N-terminal signal peptide occupies residues 1–22 (MTIKNVIFSLFILAILAETVFS). The 39-residue stretch at 23-61 (QNCMDTSCPGLKECCSRWGFCGTKDEYCGFFCFSGPCNI) folds into the Chitin-binding type-1 domain. Intrachain disulfides connect cysteine 25–cysteine 37, cysteine 30–cysteine 43, cysteine 36–cysteine 50, and cysteine 54–cysteine 59. The tract at residues 78–273 (GKIETVITSA…GVTPDQGLDC (196 aa)) is catalytic. An N-linked (GlcNAc...) asparagine glycan is attached at asparagine 99.

This sequence belongs to the glycosyl hydrolase 19 family. Chitinase class I subfamily.

In Arabidopsis thaliana (Mouse-ear cress), this protein is Inactive endochitinase At2g43600.